We begin with the raw amino-acid sequence, 570 residues long: High-affinity hexose transporter HXT6 (570 aa).

The Cytoplasmic portion of the chain corresponds to 1-60 (MSQDAAIAEQTPVEHLSAVDSASHSVLSTPSNKAERDEIKAYGEGEEHEPVVEIPKRPAS). A helical membrane pass occupies residues 61-81 (AYVTVSIMCIMIAFGGFVFGW). Over 82-116 (DTGTISGFINQTDFIRRFGMKHKDGTNYLSKVRTG) the chain is Extracellular. N-linked (GlcNAc...) asparagine glycosylation is present at Asn91. Residues 117 to 137 (LIVSIFNIGCAIGGIILSKLG) traverse the membrane as a helical segment. Residues 138 to 143 (DMYGRK) lie on the Cytoplasmic side of the membrane. The helical transmembrane segment at 144 to 164 (VGLIVVVVIYIIGIIIQIASI) threads the bilayer. Residues 165 to 174 (NKWYQYFIGR) are Extracellular-facing. A helical transmembrane segment spans residues 175-195 (IISGLGVGGIAVLSPMLISEV). Residues 196–201 (SPKHLR) are Cytoplasmic-facing. The helical transmembrane segment at 202-222 (GTLVSCYQLMITAGIFLGYCT) threads the bilayer. Residues 223–236 (NFGTKNYSNSVQWR) lie on the Extracellular side of the membrane. A glycan (N-linked (GlcNAc...) asparagine) is linked at Asn228. The chain crosses the membrane as a helical span at residues 237 to 257 (VPLGLCFAWALFMIGGMTFVP). Topologically, residues 258 to 340 (ESPRYLAEVG…IQSLQQLTGD (83 aa)) are cytoplasmic. A helical transmembrane segment spans residues 341-357 (NYFFYYGTTIFKAVGLS). Residues 358 to 363 (DSFETS) are Extracellular-facing. The chain crosses the membrane as a helical span at residues 364 to 381 (IVLGIVNFASTFVGIYVV). Over 382–388 (ERYGRRT) the chain is Cytoplasmic. The helical transmembrane segment at 389 to 409 (CLLWGAASMTACMVVYASVGV) threads the bilayer. Topologically, residues 410–431 (TRLWPNGQDQPSSKGAGNCMIV) are extracellular. A helical transmembrane segment spans residues 432 to 452 (FACFYIFCFATTWAPIPYVVV). Residues 453 to 469 (SETFPLRVKSKAMSIAT) lie on the Cytoplasmic side of the membrane. A helical membrane pass occupies residues 470–490 (AANWLWGFLIGFFTPFITGAI). Position 491 (Asn491) is a topological domain, extracellular. The helical transmembrane segment at 492 to 512 (FYYGYVFMGCLVFMFFYVLLV) threads the bilayer. Residues 513-570 (VPETKGLTLEEVNTMWEEGVLPWKSASWVPPSRRGANYDAEEMAHDDKPLYKRMFSTK) are Cytoplasmic-facing. Residue Lys560 forms a Glycyl lysine isopeptide (Lys-Gly) (interchain with G-Cter in ubiquitin) linkage.

This sequence belongs to the major facilitator superfamily. Sugar transporter (TC 2.A.1.1) family.

It is found in the membrane. High-affinity glucose transporter. This Saccharomyces cerevisiae (strain ATCC 204508 / S288c) (Baker's yeast) protein is High-affinity hexose transporter HXT6 (HXT6).